Here is a 429-residue protein sequence, read N- to C-terminus: Enolase (429 aa).

Gln-167 lines the (2R)-2-phosphoglycerate pocket. Residue Glu-209 is the Proton donor of the active site. 3 residues coordinate Mg(2+): Asp-246, Glu-289, and Asp-316. (2R)-2-phosphoglycerate is bound by residues Lys-341, Arg-370, Ser-371, and Lys-392. Lys-341 functions as the Proton acceptor in the catalytic mechanism.

Belongs to the enolase family. In terms of assembly, component of the RNA degradosome, a multiprotein complex involved in RNA processing and mRNA degradation. Requires Mg(2+) as cofactor.

It is found in the cytoplasm. It localises to the secreted. Its subcellular location is the cell surface. It catalyses the reaction (2R)-2-phosphoglycerate = phosphoenolpyruvate + H2O. The protein operates within carbohydrate degradation; glycolysis; pyruvate from D-glyceraldehyde 3-phosphate: step 4/5. Catalyzes the reversible conversion of 2-phosphoglycerate (2-PG) into phosphoenolpyruvate (PEP). It is essential for the degradation of carbohydrates via glycolysis. The polypeptide is Enolase (Pseudomonas fluorescens (strain ATCC BAA-477 / NRRL B-23932 / Pf-5)).